A 162-amino-acid polypeptide reads, in one-letter code: Sec-independent protein translocase protein TatB (162 aa).

The chain crosses the membrane as a helical span at residues 1-21; that stretch reads MFDIGFSELILIFVVGLVVLG. A disordered region spans residues 136-162; it reads LTAYYPPDDDLVSPSTTKLEQDKQNVN.

Belongs to the TatB family. In terms of assembly, the Tat system comprises two distinct complexes: a TatABC complex, containing multiple copies of TatA, TatB and TatC subunits, and a separate TatA complex, containing only TatA subunits. Substrates initially bind to the TatABC complex, which probably triggers association of the separate TatA complex to form the active translocon.

It is found in the cell inner membrane. Its function is as follows. Part of the twin-arginine translocation (Tat) system that transports large folded proteins containing a characteristic twin-arginine motif in their signal peptide across membranes. Together with TatC, TatB is part of a receptor directly interacting with Tat signal peptides. TatB may form an oligomeric binding site that transiently accommodates folded Tat precursor proteins before their translocation. The polypeptide is Sec-independent protein translocase protein TatB (Haemophilus ducreyi (strain 35000HP / ATCC 700724)).